Consider the following 414-residue polypeptide: 11-beta-hydroxysteroid dehydrogenase type 2 (414 aa).

The next 4 membrane-spanning stretches (helical) occupy residues 3 to 23, 26 to 46, 52 to 72, and 341 to 361; these read DFAV…GGAV, FLAF…ATLL, ALCM…WLYF, and YYAG…PLSI. Positions 382–414 are disordered; it reads KQQGLSPNDNNNSIKENMNDSSSNNSNFTKCID. Polar residues predominate over residues 384–397; the sequence is QGLSPNDNNNSIKE.

This sequence belongs to the short-chain dehydrogenases/reductases (SDR) family. As to expression, broadly expressed in peripheral (brain, gill, eye, heart, liver, head kidney, posterior kidney, and gut).

Its subcellular location is the membrane. The enzyme catalyses an 11beta-hydroxysteroid + NAD(+) = an 11-oxosteroid + NADH + H(+). It catalyses the reaction cortisol + NAD(+) = cortisone + NADH + H(+). The catalysed reaction is corticosterone + NAD(+) = 11-dehydrocorticosterone + NADH + H(+). It carries out the reaction 11beta,17beta-dihydroxyandrost-4-ene-3-one + NAD(+) = 17beta-hydroxyandrost-4-ene-3,11-dione + NADH + H(+). The enzyme catalyses 11beta-hydroxyandrost-4-ene-3,17-dione + NAD(+) = androst-4-ene-3,11,17-trione + NADH + H(+). Its pathway is steroid metabolism. Its function is as follows. Catalyzes the conversion of biologically active 11beta-hydroxyglucocorticoids (11beta-hydroxysteroid) such as cortisol, to inactive 11-ketoglucocorticoids (11-oxosteroid) such as cortisone, in the presence of NAD(+). Cortisol is the primary glucocorticoid in teleosts and is released to increase glucose bioavailability in order to meet the increased energy demands in response to stress. Functions as a dehydrogenase (oxidase), thereby decreasing the concentration of active glucocorticoids, regulating the hypothalamus-pituitary-interrenal (HPI) axis function in adult fish. Decreasing the excess glucocorticoids may be of relevance to brain function and neural proliferation. Plays a key role by catalyzing the oxidation of 11beta-hydroxytestosterone (11beta,17beta-dihydroxyandrost-4-ene-3-one) to 11-ketotestosterone (17beta-hydroxyandrost-4-ene-3,11-dione), the major fish androgen, that activates androgen receptor transcriptional activity. Catalyzes the conversion of 11beta-hydroxyandrostenedione (11beta-hydroxyandrost-4-ene-3,17-dione) to 11-ketoandrostenedione (androst-4-ene-3,11,17-trione), which can be further metabolized to 11-ketotestosterone. Exerts a dual role in fish by inactivating glucocorticoids and activating androgens. This is 11-beta-hydroxysteroid dehydrogenase type 2 (hsd11b2) from Danio rerio (Zebrafish).